Consider the following 263-residue polypeptide: MESLDEIQWKSPEFIQERGLNTNNVLEYFSLSPFYDRTSNNQVLMMQFQYQQIQIPPGVSFHQYFQSRLSEMTGIEFVIAYTKEPDFWIIRKQKRQDPQNTVTLQDYYIIGANVYQAPRIYDVLSSRLLASVLSIKNSTDLLNDMTSYHISDGGHSYINSIHGSSSKPSQSSAVSKPSSTNTGTNATTTPITLTTPSGATVPSTVSNGISTSTEIASGVFDTLLNDVVMNDDHLYIDEIPLYGEGSTLERLGLKGNKDAGLSL.

The tract at residues 159–205 (NSIHGSSSKPSQSSAVSKPSSTNTGTNATTTPITLTTPSGATVPSTV) is disordered. The segment covering 164–200 (SSSKPSQSSAVSKPSSTNTGTNATTTPITLTTPSGAT) has biased composition (low complexity).

Belongs to the Mediator complex subunit 6 family. In terms of assembly, component of the Mediator complex.

The protein resides in the nucleus. Its function is as follows. Component of the Mediator complex, a coactivator involved in the regulated transcription of nearly all RNA polymerase II-dependent genes. Mediator functions as a bridge to convey information from gene-specific regulatory proteins to the basal RNA polymerase II transcription machinery. Mediator is recruited to promoters by direct interactions with regulatory proteins and serves as a scaffold for the assembly of a functional preinitiation complex with RNA polymerase II and the general transcription factors. The polypeptide is Mediator of RNA polymerase II transcription subunit 6 (MED6) (Candida albicans (strain SC5314 / ATCC MYA-2876) (Yeast)).